The sequence spans 392 residues: Mitochondrial distribution and morphology protein 10 (392 aa).

The protein belongs to the MDM10 family. In terms of assembly, component of the ER-mitochondria encounter structure (ERMES) or MDM complex, composed of MMM1, MDM10, MDM12 and MDM34. Associates with the mitochondrial outer membrane sorting assembly machinery SAM(core) complex.

It is found in the mitochondrion outer membrane. Functionally, component of the ERMES/MDM complex, which serves as a molecular tether to connect the endoplasmic reticulum and mitochondria. Components of this complex are involved in the control of mitochondrial shape and protein biogenesis and may function in phospholipid exchange. MDM10 is involved in the late assembly steps of the general translocase of the mitochondrial outer membrane (TOM complex). Functions in the TOM40-specific route of the assembly of outer membrane beta-barrel proteins, including the association of TOM40 with the receptor TOM22 and small TOM proteins. Can associate with the SAM(core) complex as well as the MDM12-MMM1 complex, both involved in late steps of the major beta-barrel assembly pathway, that is responsible for biogenesis of all outer membrane beta-barrel proteins. May act as a switch that shuttles between both complexes and channels precursor proteins into the TOM40-specific pathway. Plays a role in mitochondrial morphology and in the inheritance of mitochondria. The chain is Mitochondrial distribution and morphology protein 10 from Phaeosphaeria nodorum (strain SN15 / ATCC MYA-4574 / FGSC 10173) (Glume blotch fungus).